The sequence spans 88 residues: Small ribosomal subunit protein bS20 (88 aa).

Belongs to the bacterial ribosomal protein bS20 family.

In terms of biological role, binds directly to 16S ribosomal RNA. This Desulforudis audaxviator (strain MP104C) protein is Small ribosomal subunit protein bS20.